The primary structure comprises 175 residues: Isopentenyl-diphosphate Delta-isomerase (175 aa).

Positions 23 and 30 each coordinate Mn(2+). The region spanning 28 to 162 (TLHLAFCVFV…PLRYTPWFRR (135 aa)) is the Nudix hydrolase domain. Residue cysteine 65 is part of the active site. A Mn(2+)-binding site is contributed by histidine 67. Glutamate 85 lines the Mg(2+) pocket. 2 residues coordinate Mn(2+): glutamate 111 and glutamate 113. Residue glutamate 113 is part of the active site.

The protein belongs to the IPP isomerase type 1 family. Mg(2+) serves as cofactor. Requires Mn(2+) as cofactor.

Its subcellular location is the cytoplasm. It catalyses the reaction isopentenyl diphosphate = dimethylallyl diphosphate. It functions in the pathway isoprenoid biosynthesis; dimethylallyl diphosphate biosynthesis; dimethylallyl diphosphate from isopentenyl diphosphate: step 1/1. Functionally, catalyzes the 1,3-allylic rearrangement of the homoallylic substrate isopentenyl (IPP) to its highly electrophilic allylic isomer, dimethylallyl diphosphate (DMAPP). This Halorhodospira halophila (strain DSM 244 / SL1) (Ectothiorhodospira halophila (strain DSM 244 / SL1)) protein is Isopentenyl-diphosphate Delta-isomerase.